The chain runs to 368 residues: 1-deoxy-D-xylulose 5-phosphate reductoisomerase (368 aa).

NADPH-binding residues include Thr-7, Gly-8, Ser-9, Ile-10, Gly-31, Lys-32, Asn-33, and Asn-113. Lys-114 provides a ligand contact to 1-deoxy-D-xylulose 5-phosphate. Glu-115 is a binding site for NADPH. Position 133 (Asp-133) interacts with Mn(2+). Residues Ser-134, Glu-135, Ser-158, and His-181 each coordinate 1-deoxy-D-xylulose 5-phosphate. Glu-135 is a Mn(2+) binding site. Residue Gly-187 coordinates NADPH. 1-deoxy-D-xylulose 5-phosphate contacts are provided by Ser-194, Asn-199, Lys-200, and Glu-203. Glu-203 serves as a coordination point for Mn(2+).

It belongs to the DXR family. The cofactor is Mg(2+). Requires Mn(2+) as cofactor.

It carries out the reaction 2-C-methyl-D-erythritol 4-phosphate + NADP(+) = 1-deoxy-D-xylulose 5-phosphate + NADPH + H(+). The protein operates within isoprenoid biosynthesis; isopentenyl diphosphate biosynthesis via DXP pathway; isopentenyl diphosphate from 1-deoxy-D-xylulose 5-phosphate: step 1/6. Its function is as follows. Catalyzes the NADPH-dependent rearrangement and reduction of 1-deoxy-D-xylulose-5-phosphate (DXP) to 2-C-methyl-D-erythritol 4-phosphate (MEP). The polypeptide is 1-deoxy-D-xylulose 5-phosphate reductoisomerase (Helicobacter pylori (strain J99 / ATCC 700824) (Campylobacter pylori J99)).